Consider the following 186-residue polypeptide: Inner membrane-spanning protein YciB (186 aa).

5 helical membrane-spanning segments follow: residues Ile-10 to Ile-30, Val-47 to Leu-67, Trp-76 to Phe-96, Trp-121 to Phe-141, and Phe-149 to Leu-169.

The protein belongs to the YciB family.

The protein resides in the cell inner membrane. Plays a role in cell envelope biogenesis, maintenance of cell envelope integrity and membrane homeostasis. This Acidovorax sp. (strain JS42) protein is Inner membrane-spanning protein YciB.